A 348-amino-acid polypeptide reads, in one-letter code: Phospho-2-dehydro-3-deoxyheptonate aldolase, Trp-sensitive (348 aa).

The protein belongs to the class-I DAHP synthase family.

It catalyses the reaction D-erythrose 4-phosphate + phosphoenolpyruvate + H2O = 7-phospho-2-dehydro-3-deoxy-D-arabino-heptonate + phosphate. It participates in metabolic intermediate biosynthesis; chorismate biosynthesis; chorismate from D-erythrose 4-phosphate and phosphoenolpyruvate: step 1/7. Stereospecific condensation of phosphoenolpyruvate (PEP) and D-erythrose-4-phosphate (E4P) giving rise to 3-deoxy-D-arabino-heptulosonate-7-phosphate (DAHP). The polypeptide is Phospho-2-dehydro-3-deoxyheptonate aldolase, Trp-sensitive (aroH) (Salmonella typhimurium (strain LT2 / SGSC1412 / ATCC 700720)).